The primary structure comprises 587 residues: Glutamine--tRNA ligase (587 aa).

The short motif at 58–68 (PEPNGYLHIGH) is the 'HIGH' region element. Residues 59–61 (EPN) and 65–71 (HIGHAKS) each bind ATP. Positions 91 and 240 each coordinate L-glutamine. ATP is bound by residues threonine 259 and 294-295 (RL). A 'KMSKS' region motif is present at residues 301-305 (VTSKR).

This sequence belongs to the class-I aminoacyl-tRNA synthetase family. In terms of assembly, monomer.

The protein resides in the cytoplasm. The enzyme catalyses tRNA(Gln) + L-glutamine + ATP = L-glutaminyl-tRNA(Gln) + AMP + diphosphate. This is Glutamine--tRNA ligase from Bordetella parapertussis (strain 12822 / ATCC BAA-587 / NCTC 13253).